We begin with the raw amino-acid sequence, 445 residues long: Trigger factor (445 aa).

Positions 162–247 (GDQVTIDAIG…IKAVHTAEPT (86 aa)) constitute a PPIase FKBP-type domain.

This sequence belongs to the FKBP-type PPIase family. Tig subfamily.

Its subcellular location is the cytoplasm. The catalysed reaction is [protein]-peptidylproline (omega=180) = [protein]-peptidylproline (omega=0). Functionally, involved in protein export. Acts as a chaperone by maintaining the newly synthesized protein in an open conformation. Functions as a peptidyl-prolyl cis-trans isomerase. The protein is Trigger factor of Rickettsia akari (strain Hartford).